The primary structure comprises 64 residues: MRCVPVFVILLLLIASTPSVDARPNPKDDVPLASFHGADNANRILRTLWNLRGCCEDKTCCFIG.

Positions 1-22 (MRCVPVFVILLLLIASTPSVDA) are cleaved as a signal peptide. The propeptide occupies 23 to 52 (RPNPKDDVPLASFHGADNANRILRTLWNLR). I63 is modified (isoleucine amide).

Belongs to the conotoxin T superfamily. Contains 2 disulfide bonds that can be either 'C1-C3, C2-C4' or 'C1-C4, C2-C3', since these disulfide connectivities have been observed for conotoxins with cysteine framework V (for examples, see AC P0DQQ7 and AC P81755). In terms of tissue distribution, expressed by the venom duct.

Its subcellular location is the secreted. The chain is Conotoxin Pu5.2 from Conus pulicarius (Flea-bitten cone).